We begin with the raw amino-acid sequence, 337 residues long: Serpentine receptor class delta-50 (337 aa).

The next 7 helical transmembrane spans lie at 10 to 30 (VLIL…SQLL), 48 to 68 (IYLF…FVLQ), 107 to 127 (VLFH…IIAF), 147 to 167 (QLVI…LSPN), 202 to 222 (SSQT…ALVF), 250 to 270 (GLTL…TYYI), and 280 to 300 (LFVE…DPLL).

Belongs to the nematode receptor-like protein srd family.

The protein resides in the membrane. This chain is Serpentine receptor class delta-50, found in Caenorhabditis elegans.